Reading from the N-terminus, the 371-residue chain is Isopentenyl-diphosphate delta-isomerase (371 aa).

Residue 9-10 (RK) coordinates substrate. Residues T66, 67 to 69 (GMT), S100, and N128 each bind FMN. 100–102 (SQR) contacts substrate. Q167 is a substrate binding site. E168 contacts Mg(2+). FMN contacts are provided by residues K199, S224, T229, 278–280 (GMR), and 299–300 (AL).

This sequence belongs to the IPP isomerase type 2 family. As to quaternary structure, homooctamer. Dimer of tetramers. It depends on FMN as a cofactor. NADPH is required as a cofactor. Mg(2+) serves as cofactor.

It localises to the cytoplasm. It catalyses the reaction isopentenyl diphosphate = dimethylallyl diphosphate. Its function is as follows. Involved in the biosynthesis of isoprenoids. Catalyzes the 1,3-allylic rearrangement of the homoallylic substrate isopentenyl (IPP) to its allylic isomer, dimethylallyl diphosphate (DMAPP). The sequence is that of Isopentenyl-diphosphate delta-isomerase from Pyrococcus horikoshii (strain ATCC 700860 / DSM 12428 / JCM 9974 / NBRC 100139 / OT-3).